The primary structure comprises 980 residues: Ras and Rab interactor 3 (980 aa).

Residues 1-40 are disordered; that stretch reads MRRAEAPSSAHPAGPIPDAGKGEGEEDEEKDGTRLGLSTT. The SH2 domain maps to 63–158; sequence WLQLGLGQAE…LLPFTLRLPQ (96 aa). Residues 247–260 are compositionally biased toward pro residues; sequence PLPTGSYPPRPTPA. 2 disordered regions span residues 247–496 and 509–560; these read PLPT…TGAS and QHLQ…LEFS. Positions 261-271 are enriched in low complexity; it reads TPDATSPTSKG. Residues 274–308 are compositionally biased toward pro residues; the sequence is RRPPPPPPLPTVPPTGPARPLAPPVPPAGPLPNSP. Polar residues-rich tracts occupy residues 406–422 and 484–494; these read ISRT…TVSS and QEASSEKQATG. Over residues 514-523 the composition is skewed to low complexity; sequence QSSSCPQSSP. Residues 584 to 729 form an interaction with RAB5B region; it reads FASVFHAFLS…TTTDLGVTTS (146 aa). The VPS9 domain occupies 700–843; the sequence is HSRDGSLQQL…IKNYDKITVT (144 aa). Residues 865–962 form the Ras-associating domain; that stretch reads KARASRSSVQ…FHFVYRPQDS (98 aa).

The protein belongs to the RIN (Ras interaction/interference) family. As to quaternary structure, interacts with CD2AP, RAB5B, RAB31 and BIN1.

It localises to the cytoplasm. It is found in the cytoplasmic vesicle. The protein localises to the early endosome. Ras effector protein that functions as a guanine nucleotide exchange (GEF) for RAB5B and RAB31, by exchanging bound GDP for free GTP. Required for normal RAB31 function. The polypeptide is Ras and Rab interactor 3 (Rin3) (Mus musculus (Mouse)).